The sequence spans 762 residues: Protein PHTF1 (762 aa).

A PHTF domain is found at 6–150 (RDAISWYQKK…VHCQIVSTQI (145 aa)). Transmembrane regions (helical) follow at residues 77–97 (GLVRVVFFPLFSSWWIQVTSL), 99–119 (IFVWLLLLYLMQVIALVLYFM), and 121–141 (PIVNVSEVLGPLCLMLLMGTV). The interval 152–188 (RPSGNNGNRRRRKLRKTVNGDGSRENGNNSSDKARGV) is disordered. Asn179, Asn180, and Asn197 each carry an N-linked (GlcNAc...) asparagine glycan. Phosphoserine is present on residues Ser272, Ser276, Ser277, Ser334, and Ser336. Disordered stretches follow at residues 344 to 379 (SAAFSQGSRSGMSGGSRSLNMLRRDSESTRHDSETE) and 393 to 415 (RSSVTSDSEGAHVSSLHSGTKRD). The span at 348–361 (SQGSRSGMSGGSRS) shows a compositional bias: low complexity. A compositionally biased stretch (basic and acidic residues) spans 365-376 (LRRDSESTRHDS). N-linked (GlcNAc...) asparagine glycosylation occurs at Asn431. The next 4 membrane-spanning stretches (helical) occupy residues 473–493 (GVGYQMLGNIVTIGLAFFPFL), 512–532 (EILTLFCGAPPVTPIIILSII), 611–631 (VVVSSVFLLTLSIAFICCAQV), and 645–665 (WEFLIWESALLLFLLRLASLG). N-linked (GlcNAc...) asparagine glycosylation is found at Asn674 and Asn733. The helical transmembrane segment at 737-757 (VVILSAVSGVISDLLGFNIRL) threads the bilayer.

In terms of assembly, interacts with FEM1B.

It is found in the endoplasmic reticulum membrane. It localises to the golgi apparatus. The protein resides in the cis-Golgi network membrane. The chain is Protein PHTF1 (PHTF1) from Bos taurus (Bovine).